A 922-amino-acid chain; its full sequence is Disintegrin and metalloproteinase domain-containing protein 10 homolog (922 aa).

An N-terminal signal peptide occupies residues 1 to 26 (MSSPIRNRLQLVVTLIFCLFFENVNG). A propeptide spanning residues 27–228 (LNNFIDNFET…YMTMGGRSKR (202 aa)) is cleaved from the precursor. N-linked (GlcNAc...) asparagine glycosylation is found at N74, N185, and N346. At 229 to 745 (ANTLRDHDGL…ETLTQWAQDN (517 aa)) the chain is on the extracellular side. Residues 242-480 (RTCSLYMQAD…CSVKNISAVL (239 aa)) form the Peptidase M12B domain. H426 is a binding site for Zn(2+). E427 is an active-site residue. Zn(2+) contacts are provided by H430 and H436. Cysteines 442 and 471 form a disulfide. An N-linked (GlcNAc...) asparagine glycan is attached at N475. Positions 511–615 (SAFCGNQIYE…QCPVSPPKHD (105 aa)) constitute a Disintegrin domain. Cystine bridges form between C542–C577, C564–C572, C588–C607, C594–C626, and C619–C631. N632 is a glycosylation site (N-linked (GlcNAc...) asparagine). 4 cysteine pairs are disulfide-bonded: C636–C659, C644–C665, C655–C707, and C700–C713. The N-linked (GlcNAc...) asparagine glycan is linked to N677. Residues 746-766 (WWVVGVGGLVFLVIMALFVKC) traverse the membrane as a helical segment. Over 767–922 (CAVHTPSTNP…SGNGGKKKGK (156 aa)) the chain is Cytoplasmic. Disordered stretches follow at residues 797–837 (QHRQ…PSAP) and 864–922 (PGSS…KKGK). Over residues 805–834 (AAGSVPPGPGAQPRSGAASAPSRTTPSARP) the composition is skewed to low complexity.

As to quaternary structure, may interact with tetraspanin tsp-12; the interaction promotes sup-17 cell membrane localization. It depends on Zn(2+) as a cofactor. Expressed in the germline.

The protein resides in the cell membrane. It localises to the basolateral cell membrane. It is found in the cytoplasmic vesicle membrane. It catalyses the reaction Endopeptidase of broad specificity.. In terms of biological role, metalloprotease. Acts together with protease adm-4 and in a cell autonomous manner to facilitate lin-12/Notch signaling during developmental cell fate decision, including anchor cell/ventral uterine precursor cell decision and vulva precursor cell specification. By modulating glp-1/Notch signaling, plays a role in germline development. Probably by modulating BMP-like Sma/Mab signaling via the shedding of unc-40 ectodomain, involved in the regulation of body size and mesoderm development. Probably by shedding ephrin efn-4, regulates axon guidance of SDQL neuron during development. This Caenorhabditis elegans protein is Disintegrin and metalloproteinase domain-containing protein 10 homolog.